We begin with the raw amino-acid sequence, 120 residues long: Immunoglobulin kappa variable 2D-28 (120 aa).

An N-terminal signal peptide occupies residues 1–19 (MRLPAQLLGLLMLWVSGSS). The Ig-like domain maps to 20–120 (GDIVMTQSPL…YYCMQALQTP (101 aa)). The tract at residues 21 to 43 (DIVMTQSPLSLPVTPGEPASISC) is framework-1. Cys43 and Cys113 are oxidised to a cystine. Residues 44–59 (RSSQSLLHSNGYNYLD) form a complementarity-determining-1 region. Residues 60–74 (WYLQKPGQSPQLLIY) are framework-2. Residues 75–81 (LGSNRAS) form a complementarity-determining-2 region. Positions 82–113 (GVPDRFSGSGSGTDFTLKISRVEAEDVGVYYC) are framework-3. Positions 114–120 (MQALQTP) are complementarity-determining-3.

Immunoglobulins are composed of two identical heavy chains and two identical light chains; disulfide-linked.

The protein localises to the secreted. It is found in the cell membrane. Functionally, v region of the variable domain of immunoglobulin light chains that participates in the antigen recognition. Immunoglobulins, also known as antibodies, are membrane-bound or secreted glycoproteins produced by B lymphocytes. In the recognition phase of humoral immunity, the membrane-bound immunoglobulins serve as receptors which, upon binding of a specific antigen, trigger the clonal expansion and differentiation of B lymphocytes into immunoglobulins-secreting plasma cells. Secreted immunoglobulins mediate the effector phase of humoral immunity, which results in the elimination of bound antigens. The antigen binding site is formed by the variable domain of one heavy chain, together with that of its associated light chain. Thus, each immunoglobulin has two antigen binding sites with remarkable affinity for a particular antigen. The variable domains are assembled by a process called V-(D)-J rearrangement and can then be subjected to somatic hypermutations which, after exposure to antigen and selection, allow affinity maturation for a particular antigen. This Homo sapiens (Human) protein is Immunoglobulin kappa variable 2D-28.